Here is a 118-residue protein sequence, read N- to C-terminus: SPbeta prophage-derived uncharacterized protein YomS (118 aa).

This Bacillus subtilis (strain 168) protein is SPbeta prophage-derived uncharacterized protein YomS (yomS).